Consider the following 242-residue polypeptide: Phosphoribosylaminoimidazole-succinocarboxamide synthase (242 aa).

It belongs to the SAICAR synthetase family.

It carries out the reaction 5-amino-1-(5-phospho-D-ribosyl)imidazole-4-carboxylate + L-aspartate + ATP = (2S)-2-[5-amino-1-(5-phospho-beta-D-ribosyl)imidazole-4-carboxamido]succinate + ADP + phosphate + 2 H(+). The protein operates within purine metabolism; IMP biosynthesis via de novo pathway; 5-amino-1-(5-phospho-D-ribosyl)imidazole-4-carboxamide from 5-amino-1-(5-phospho-D-ribosyl)imidazole-4-carboxylate: step 1/2. This chain is Phosphoribosylaminoimidazole-succinocarboxamide synthase, found in Ehrlichia chaffeensis (strain ATCC CRL-10679 / Arkansas).